The chain runs to 338 residues: Cytosolic sulfotransferase 16 (338 aa).

Residue 81–86 participates in 3'-phosphoadenylyl sulfate binding; the sequence is KTGTTW. Catalysis depends on His-143, which acts as the Proton acceptor. 3'-phosphoadenylyl sulfate is bound by residues Arg-165, Ser-173, Tyr-231, and 301–303; that span reads RKG.

This sequence belongs to the sulfotransferase 1 family. As to expression, highly expressed in roots, stems and mature leaves. Low expression in young leaves and flowers. Barely detected in siliques.

It is found in the cytoplasm. It catalyses the reaction (Z)-desulfoglucotropeolin + 3'-phosphoadenylyl sulfate = (Z)-glucotropeolin + adenosine 3',5'-bisphosphate + H(+). The catalysed reaction is (Z)-indolylmethyl desulfoglucosinolate + 3'-phosphoadenylyl sulfate = (Z)-glucobrassicin + adenosine 3',5'-bisphosphate + H(+). With respect to regulation, inhibited by phosphoadenosine 5'-phosphate (PAP). Its function is as follows. Sulfotransferase that utilizes 3'-phospho-5'-adenylyl sulfate (PAPS) as sulfonate donor to catalyze the sulfate conjugation of desulfo-glucosinolates (dsGSs), the final step in the biosynthesis of the glucosinolate core structure. Substrate preference is desulfo-2-phenylethyl glucosinolate &gt; desulfo-indol-3-yl methyl glucosinolate &gt; desulfo-benzyl glucosinolate &gt; desulfo-6-methylthiohexyl glucosinolate &gt; desulfo-4-methylthiobutyl glucosinolate &gt; desulfo-3-methylthiopropyl glucosinolate &gt; desulfo-singrin &gt; desulfo-3-butenyl glucosinolate. The sequence is that of Cytosolic sulfotransferase 16 (SOT16) from Arabidopsis thaliana (Mouse-ear cress).